We begin with the raw amino-acid sequence, 440 residues long: MSEFSQTVPELVAWARKNDFSISLPVDRLSFLLAIATLNGERLEGEMSEGELVDAFRHVSDAFEQTSETISQRANNAINDLVRQRLLNRFTSEITEGNAIYRLTPLGIGITDYYIRQREFSTLRLSMQLSIVAGELKRAADAAEEGGDEFHWHRNVFAPLKYSVAEIFDSIDLTQRIMDEQQQLVKDDIAQLLNKDWRAAISSCELLLSETSGTLRELQDTLDAAGDKLQANLLRIQDSTMARDDLHFVDRLVFDLQSKLDRIVSWGQQAIDLWIGYDRHVHKFIRTAIDMDKNRVFAQRLRQSVQTYFDEPWALTYANADRLLDMRDEEMALRDEEVTGELPADLEFEEFNEIREQLAALIEAQLAVYKEKGIPLDLGLVAREFLAQYPRGRHFDVARIVVDQAVQLGVAQADFTGLPAKWQPINDYGAKVQAHVIDKY.

The tract at residues 208 to 236 (LSETSGTLRELQDTLDAAGDKLQANLLRI) is leucine-zipper.

Belongs to the MukF family. Interacts, and probably forms a ternary complex, with MukE and MukB via its C-terminal region. The complex formation is stimulated by calcium or magnesium. It is required for an interaction between MukE and MukB.

The protein resides in the cytoplasm. It localises to the nucleoid. Functionally, involved in chromosome condensation, segregation and cell cycle progression. May participate in facilitating chromosome segregation by condensation DNA from both sides of a centrally located replisome during cell division. Not required for mini-F plasmid partitioning. Probably acts via its interaction with MukB and MukE. Overexpression results in anucleate cells. It has a calcium binding activity. The protein is Chromosome partition protein MukF of Klebsiella pneumoniae subsp. pneumoniae (strain ATCC 700721 / MGH 78578).